A 398-amino-acid polypeptide reads, in one-letter code: Arginine biosynthesis bifunctional protein ArgJ (398 aa).

Thr-148, Lys-174, Thr-185, Glu-271, Asn-393, and Thr-398 together coordinate substrate. The Nucleophile role is filled by Thr-185.

This sequence belongs to the ArgJ family. Heterotetramer of two alpha and two beta chains.

It is found in the cytoplasm. The catalysed reaction is N(2)-acetyl-L-ornithine + L-glutamate = N-acetyl-L-glutamate + L-ornithine. It catalyses the reaction L-glutamate + acetyl-CoA = N-acetyl-L-glutamate + CoA + H(+). The protein operates within amino-acid biosynthesis; L-arginine biosynthesis; L-ornithine and N-acetyl-L-glutamate from L-glutamate and N(2)-acetyl-L-ornithine (cyclic): step 1/1. Its pathway is amino-acid biosynthesis; L-arginine biosynthesis; N(2)-acetyl-L-ornithine from L-glutamate: step 1/4. Functionally, catalyzes two activities which are involved in the cyclic version of arginine biosynthesis: the synthesis of N-acetylglutamate from glutamate and acetyl-CoA as the acetyl donor, and of ornithine by transacetylation between N(2)-acetylornithine and glutamate. The polypeptide is Arginine biosynthesis bifunctional protein ArgJ (Listeria monocytogenes serovar 1/2a (strain ATCC BAA-679 / EGD-e)).